We begin with the raw amino-acid sequence, 518 residues long: E3 ubiquitin-protein ligase TRIM39 (518 aa).

An RING-type zinc finger spans residues 29–70 (CSVCLEYLKEPVIIECGHNFCKACITRWWEDLERDFPCPVCR). The B box-type zinc finger occupies 102 to 143 (RDESLCPQHHEALSLFCYEDQEAVCLICAISHTHRAHTVVPL). Zn(2+)-binding residues include Cys-107, His-110, Cys-129, and His-135. Positions 181-250 (ELKRLVESRR…AHLAAEVEGK (70 aa)) form a coiled coil. Interaction with CDKN1A regions lie at residues 268–337 (KNIP…QLIA) and 389–518 (TSGR…TDWE). Positions 319-514 (SNFPRQYFAL…NAAPLTIRPP (196 aa)) constitute a B30.2/SPRY domain.

It belongs to the TRIM/RBCC family. As to quaternary structure, interacts with MOAP1. Interacts with CDKN1A. Post-translationally, autoubiquitinated.

The protein resides in the cytoplasm. The protein localises to the cytosol. Its subcellular location is the mitochondrion. It is found in the nucleus. It carries out the reaction S-ubiquitinyl-[E2 ubiquitin-conjugating enzyme]-L-cysteine + [acceptor protein]-L-lysine = [E2 ubiquitin-conjugating enzyme]-L-cysteine + N(6)-ubiquitinyl-[acceptor protein]-L-lysine.. Its pathway is protein modification; protein ubiquitination. Its function is as follows. E3 ubiquitin-protein ligase. May facilitate apoptosis by inhibiting APC/C-Cdh1-mediated poly-ubiquitination and subsequent proteasome-mediated degradation of the pro-apoptotic protein MOAP1. Regulates the G1/S transition of the cell cycle and DNA damage-induced G2 arrest by stabilizing CDKN1A/p21. Positively regulates CDKN1A/p21 stability by competing with DTL for CDKN1A/p21 binding, therefore disrupting DCX(DTL) E3 ubiquitin ligase complex-mediated CDKN1A/p21 ubiquitination and degradation. The protein is E3 ubiquitin-protein ligase TRIM39 (TRIM39) of Pan troglodytes (Chimpanzee).